The chain runs to 150 residues: Ribonuclease K6 (150 aa).

A signal peptide spans 1–23 (MVLCFPLLLLLLVLWGPVCPLHA). The Proton acceptor role is filled by His-38. 4 cysteine pairs are disulfide-bonded: Cys-46-Cys-104, Cys-60-Cys-114, Cys-78-Cys-129, and Cys-85-Cys-92. Residues 61–65 (KHQNT) and Lys-86 each bind substrate. N-linked (GlcNAc...) asparagine glycosylation occurs at Asn-100. Arg-105 contacts substrate. The active-site Proton donor is the His-145.

It belongs to the pancreatic ribonuclease family. In terms of assembly, interacts (via N-terminus) with bacterial lipopolysaccharide (LPS).

It localises to the secreted. The protein resides in the lysosome. It is found in the cytoplasmic granule. Its function is as follows. Ribonuclease which shows a preference for the pyrimidines uridine and cytosine. Has potent antibacterial activity against a range of Gram-positive and Gram-negative bacteria, including P.aeruginosa, A.baumanii, M.luteus, S.aureus, E.faecalis, E.faecium, S.saprophyticus and E.coli. Causes loss of bacterial membrane integrity, and also promotes agglutination of Gram-negative bacteria. Probably contributes to urinary tract sterility. Bactericidal activity is independent of RNase activity. The polypeptide is Ribonuclease K6 (RNASE6) (Pan troglodytes (Chimpanzee)).